Reading from the N-terminus, the 345-residue chain is UDP-N-acetylenolpyruvoylglucosamine reductase (345 aa).

The 169-residue stretch at 25–193 (LPAHCTDFVS…VGVTFLLPKA (169 aa)) folds into the FAD-binding PCMH-type domain. The active site involves R169. The Proton donor role is filled by S237. The active site involves E333.

It belongs to the MurB family. It depends on FAD as a cofactor.

It localises to the cytoplasm. It catalyses the reaction UDP-N-acetyl-alpha-D-muramate + NADP(+) = UDP-N-acetyl-3-O-(1-carboxyvinyl)-alpha-D-glucosamine + NADPH + H(+). Its pathway is cell wall biogenesis; peptidoglycan biosynthesis. Functionally, cell wall formation. This chain is UDP-N-acetylenolpyruvoylglucosamine reductase, found in Pseudoalteromonas atlantica (strain T6c / ATCC BAA-1087).